The following is a 351-amino-acid chain: Glycerol-3-phosphate dehydrogenase [NAD(P)+] (351 aa).

NADPH is bound by residues S12, W13, H33, and K114. Residues K114, G145, and S147 each contribute to the sn-glycerol 3-phosphate site. A149 serves as a coordination point for NADPH. Residues K200, D253, S263, R264, and N265 each coordinate sn-glycerol 3-phosphate. Catalysis depends on K200, which acts as the Proton acceptor. Position 264 (R264) interacts with NADPH. NADPH-binding residues include V288 and E290.

The protein belongs to the NAD-dependent glycerol-3-phosphate dehydrogenase family.

It localises to the cytoplasm. The enzyme catalyses sn-glycerol 3-phosphate + NAD(+) = dihydroxyacetone phosphate + NADH + H(+). The catalysed reaction is sn-glycerol 3-phosphate + NADP(+) = dihydroxyacetone phosphate + NADPH + H(+). Its pathway is membrane lipid metabolism; glycerophospholipid metabolism. In terms of biological role, catalyzes the reduction of the glycolytic intermediate dihydroxyacetone phosphate (DHAP) to sn-glycerol 3-phosphate (G3P), the key precursor for phospholipid synthesis. This chain is Glycerol-3-phosphate dehydrogenase [NAD(P)+], found in Lacticaseibacillus paracasei (strain ATCC 334 / BCRC 17002 / CCUG 31169 / CIP 107868 / KCTC 3260 / NRRL B-441) (Lactobacillus paracasei).